The sequence spans 199 residues: Cytochrome c oxidase subunit 2 (199 aa).

A helical membrane pass occupies residues alanine 1 to methionine 13. At leucine 14–glutamine 26 the chain is on the mitochondrial matrix side. The helical transmembrane segment at glutamate 27–methionine 54 threads the bilayer. Over aspartate 55–leucine 199 the chain is Mitochondrial intermembrane. Histidine 128, cysteine 163, glutamate 165, cysteine 167, histidine 171, and methionine 174 together coordinate Cu cation. Glutamate 165 is a Mg(2+) binding site.

It belongs to the cytochrome c oxidase subunit 2 family. In terms of assembly, component of the cytochrome c oxidase (complex IV, CIV), a multisubunit enzyme composed of 14 subunits. The complex is composed of a catalytic core of 3 subunits MT-CO1, MT-CO2 and MT-CO3, encoded in the mitochondrial DNA, and 11 supernumerary subunits COX4I, COX5A, COX5B, COX6A, COX6B, COX6C, COX7A, COX7B, COX7C, COX8 and NDUFA4, which are encoded in the nuclear genome. The complex exists as a monomer or a dimer and forms supercomplexes (SCs) in the inner mitochondrial membrane with NADH-ubiquinone oxidoreductase (complex I, CI) and ubiquinol-cytochrome c oxidoreductase (cytochrome b-c1 complex, complex III, CIII), resulting in different assemblies (supercomplex SCI(1)III(2)IV(1) and megacomplex MCI(2)III(2)IV(2)). Found in a complex with TMEM177, COA6, COX18, COX20, SCO1 and SCO2. Interacts with TMEM177 in a COX20-dependent manner. Interacts with COX20. Interacts with COX16. The cofactor is Cu cation.

Its subcellular location is the mitochondrion inner membrane. It carries out the reaction 4 Fe(II)-[cytochrome c] + O2 + 8 H(+)(in) = 4 Fe(III)-[cytochrome c] + 2 H2O + 4 H(+)(out). Component of the cytochrome c oxidase, the last enzyme in the mitochondrial electron transport chain which drives oxidative phosphorylation. The respiratory chain contains 3 multisubunit complexes succinate dehydrogenase (complex II, CII), ubiquinol-cytochrome c oxidoreductase (cytochrome b-c1 complex, complex III, CIII) and cytochrome c oxidase (complex IV, CIV), that cooperate to transfer electrons derived from NADH and succinate to molecular oxygen, creating an electrochemical gradient over the inner membrane that drives transmembrane transport and the ATP synthase. Cytochrome c oxidase is the component of the respiratory chain that catalyzes the reduction of oxygen to water. Electrons originating from reduced cytochrome c in the intermembrane space (IMS) are transferred via the dinuclear copper A center (CU(A)) of subunit 2 and heme A of subunit 1 to the active site in subunit 1, a binuclear center (BNC) formed by heme A3 and copper B (CU(B)). The BNC reduces molecular oxygen to 2 water molecules using 4 electrons from cytochrome c in the IMS and 4 protons from the mitochondrial matrix. This is Cytochrome c oxidase subunit 2 (MT-CO2) from Apteryx australis (Southern brown kiwi).